We begin with the raw amino-acid sequence, 446 residues long: Mannan endo-1,6-alpha-mannosidase DCW1 (446 aa).

The signal sequence occupies residues 1 to 18; that stretch reads MRLVTLLSGLVSLVSVFG. N-linked (GlcNAc...) asparagine glycosylation is found at asparagine 31, asparagine 81, asparagine 106, asparagine 200, asparagine 222, asparagine 237, asparagine 262, asparagine 278, asparagine 285, asparagine 334, asparagine 391, and asparagine 397. The tract at residues 389–408 is disordered; the sequence is PYNATNGGNSTGDGAAGTKP. Serine 422 is lipidated: GPI-anchor amidated serine. A propeptide spans 423-446 (removed in mature form); that stretch reads RAGAGIITAIIGISIIACALWLVY.

The protein belongs to the glycosyl hydrolase 76 family.

Its subcellular location is the secreted. It is found in the cell wall. The protein localises to the cell membrane. The enzyme catalyses Random hydrolysis of (1-&gt;6)-alpha-D-mannosidic linkages in unbranched (1-&gt;6)-mannans.. Its function is as follows. Required for normal synthesis of the cell wall. The chain is Mannan endo-1,6-alpha-mannosidase DCW1 (DCW1) from Candida glabrata (strain ATCC 2001 / BCRC 20586 / JCM 3761 / NBRC 0622 / NRRL Y-65 / CBS 138) (Yeast).